The following is a 359-amino-acid chain: UPF0284 protein MTH_1426 (359 aa).

Belongs to the UPF0284 family.

The chain is UPF0284 protein MTH_1426 from Methanothermobacter thermautotrophicus (strain ATCC 29096 / DSM 1053 / JCM 10044 / NBRC 100330 / Delta H) (Methanobacterium thermoautotrophicum).